Reading from the N-terminus, the 142-residue chain is UPF0102 protein PsycPRwf_0497 (142 aa).

It belongs to the UPF0102 family.

The polypeptide is UPF0102 protein PsycPRwf_0497 (Psychrobacter sp. (strain PRwf-1)).